A 265-amino-acid chain; its full sequence is Mlc titration factor A (265 aa).

H111, H148, H152, and E211 together coordinate Zn(2+).

The protein belongs to the MtfA family. Monomer in solution. Interacts with Mlc. Requires Zn(2+) as cofactor.

Its subcellular location is the cytoplasm. With respect to regulation, association between Mlc and MtfA may induce structural changes that activate the peptidase activity of MtfA while inactivating the DNA-binding ability of Mlc. The aminopeptidase activity is partially inhibited by metal chelators such as EDTA and phenantroline, but not by inhibitors for serine-, aspartyl-, or cysteine-proteases. Functionally, involved in the modulation of the activity of the glucose-phosphotransferase system (glucose-PTS). Interacts with the transcriptional repressor Mlc, preventing its interaction with DNA and leading to the modulation of expression of genes regulated by Mlc, including ptsG, which encodes the PTS system glucose-specific EIICB component. Shows zinc-dependent metallopeptidase activity. In vitro, can cleave several artificial substrates. The highest activity is observed for L-alanine fused to 4-nitroanilide (L-alanine-pNA). Shows lower activity towards proline-pNA and valine-pNA. This Klebsiella pneumoniae subsp. pneumoniae (strain ATCC 700721 / MGH 78578) protein is Mlc titration factor A.